The following is an 83-amino-acid chain: Mu-theraphotoxin-Hhn2j 4 (83 aa).

The N-terminal stretch at 1–21 is a signal peptide; that stretch reads MKASMFLALAGLVLLFVVGYA. Positions 22-48 are excised as a propeptide; that stretch reads SESEEKEFPIELLSKIFAVDVFKGEGR. Intrachain disulfides connect Cys-50–Cys-65, Cys-57–Cys-70, and Cys-64–Cys-77. Leu-81 bears the Leucine amide mark.

It belongs to the neurotoxin 10 (Hwtx-1) family. 15 (Hntx-3) subfamily. Monomer. In terms of tissue distribution, expressed by the venom gland.

It localises to the secreted. In terms of biological role, lethal neurotoxin. Selectively blocks tetrodotoxin-sensitive voltage-gated sodium channels (Nav). Does not affect tetrodotoxin-resistant voltage-gated sodium channels or calcium channels. The polypeptide is Mu-theraphotoxin-Hhn2j 4 (Cyriopagopus hainanus (Chinese bird spider)).